The sequence spans 354 residues: 3-isopropylmalate dehydrogenase (354 aa).

76–87 serves as a coordination point for NAD(+); the sequence is GPRWDSAKERPE. Substrate is bound by residues R94, R104, R130, and D215. Residues D215, D239, and D243 each coordinate Mg(2+). 273–285 contributes to the NAD(+) binding site; the sequence is GSAPDIAGKNKAN.

It belongs to the isocitrate and isopropylmalate dehydrogenases family. LeuB type 1 subfamily. In terms of assembly, homodimer. It depends on Mg(2+) as a cofactor. Requires Mn(2+) as cofactor.

The protein resides in the cytoplasm. It carries out the reaction (2R,3S)-3-isopropylmalate + NAD(+) = 4-methyl-2-oxopentanoate + CO2 + NADH. It functions in the pathway amino-acid biosynthesis; L-leucine biosynthesis; L-leucine from 3-methyl-2-oxobutanoate: step 3/4. In terms of biological role, catalyzes the oxidation of 3-carboxy-2-hydroxy-4-methylpentanoate (3-isopropylmalate) to 3-carboxy-4-methyl-2-oxopentanoate. The product decarboxylates to 4-methyl-2 oxopentanoate. The sequence is that of 3-isopropylmalate dehydrogenase from Bacillus cereus (strain ATCC 14579 / DSM 31 / CCUG 7414 / JCM 2152 / NBRC 15305 / NCIMB 9373 / NCTC 2599 / NRRL B-3711).